The sequence spans 573 residues: BICD family-like cargo adapter 1 (573 aa).

Residues 67-97 (ERPSDPGEHPQAEPGSLAEGAGPQPPPSQDP) are disordered. Residues 68-77 (RPSDPGEHPQ) are compositionally biased toward basic and acidic residues. The short motif at 113 to 117 (AARLG) is the CC1 box element. The stretch at 118–376 (KALLERNQDM…QLWEAYCQVR (259 aa)) forms a coiled coil. The interval 386–412 (DSADSAVSTDSSMDESSETSSAKDVPA) is disordered. A compositionally biased stretch (low complexity) spans 387 to 396 (SADSAVSTDS). The stretch at 440–525 (LSVEMTALKE…LEAWQDDMHR (86 aa)) forms a coiled coil.

The protein belongs to the BICDR family. In terms of assembly, part of a tripartite complex with dynein and dynactin, acts an adapter linking the dynein motor complex and dynactin. Interacts with KIF1C. Interacts with RAB6A and RAB6B; interaction is specific to Rab6.

It localises to the cytoplasm. The protein resides in the cytoskeleton. Its subcellular location is the microtubule organizing center. The protein localises to the centrosome. Acts as an adapter protein linking the dynein motor complex to various cargos and converts dynein from a non-processive to a highly processive motor in the presence of dynactin. Facilitates the interaction between dynein and dynactin and activates dynein processivity (the ability to move along a microtubule for a long distance without falling off the track). Predominantly recruits 2 dyneins, which increases both the force and speed of the microtubule motor. Component of secretory vesicle machinery in developing neurons that acts as a regulator of neurite outgrowth. Regulates the secretory vesicle transport by controlling the accumulation of Rab6-containing secretory vesicles in the pericentrosomal region restricting anterograde secretory transport during the early phase of neuronal differentiation, thereby inhibiting neuritogenesis. The sequence is that of BICD family-like cargo adapter 1 (BICDL1) from Homo sapiens (Human).